The sequence spans 134 residues: MKSVITISASLAISLMLCCTAQANDHKILGVIAMPRNETNDLALKLPVCRIVKRIQLSTDHGDLQLSGASVYFKATRSASQTLNIPSEIKEGQTTDWININSDNDNKRCVSKITFSGHTVNSSDMATLKIIGDD.

A signal peptide spans 1–23 (MKSVITISASLAISLMLCCTAQA).

This sequence belongs to the UPF0412 family.

In Escherichia coli O127:H6 (strain E2348/69 / EPEC), this protein is UPF0412 protein YaaI.